A 121-amino-acid polypeptide reads, in one-letter code: Ribonuclease P protein component (121 aa).

The protein belongs to the RnpA family. Consists of a catalytic RNA component (M1 or rnpB) and a protein subunit.

The enzyme catalyses Endonucleolytic cleavage of RNA, removing 5'-extranucleotides from tRNA precursor.. RNaseP catalyzes the removal of the 5'-leader sequence from pre-tRNA to produce the mature 5'-terminus. It can also cleave other RNA substrates such as 4.5S RNA. The protein component plays an auxiliary but essential role in vivo by binding to the 5'-leader sequence and broadening the substrate specificity of the ribozyme. The chain is Ribonuclease P protein component from Neisseria gonorrhoeae (strain ATCC 700825 / FA 1090).